Here is a 627-residue protein sequence, read N- to C-terminus: Chaperone protein HtpG (627 aa).

The a; substrate-binding stretch occupies residues 1 to 339; that stretch reads MKGQETRGFQ…SNDLPLNVSR (339 aa). Residues 340–555 are b; the sequence is EILQDSRVTQ…ADEMSTQMAK (216 aa). The c stretch occupies residues 556 to 627; the sequence is LFAAAGQQAP…IRRMNQLLSA (72 aa).

Belongs to the heat shock protein 90 family. Homodimer.

It localises to the cytoplasm. Its function is as follows. Molecular chaperone. Has ATPase activity. In Pectobacterium atrosepticum (strain SCRI 1043 / ATCC BAA-672) (Erwinia carotovora subsp. atroseptica), this protein is Chaperone protein HtpG.